Reading from the N-terminus, the 591-residue chain is ADP-ribosylating toxin CARDS (591 aa).

The tract at residues 1–205 is mono-ADP ribosyltransferase (mART) domain; sequence MPNPVRFVYR…LPTPGIATPV (205 aa). An NAD(+)-binding pocket region spans residues 206–256; that stretch reads HLSIPQAASVADVSEGTSASLSFACPDWSPPSSNGENPLDKCIAEKIDNYN. A disulfide bridge connects residues Cys-230 and Cys-247. Residues 268–272 carry the KELED motif, involved in host ER trafficking, solvent exposed in the crystal structure motif; sequence KELED. Residues 273–439 are D2 domain; that stretch reads TPVYLRGIKT…QFVTMRAAST (167 aa). A D3 domain region spans residues 440 to 591; it reads FFVDVQLGWY…ILVKDGFDRF (152 aa).

The protein belongs to the bacterial exotoxin subunit A family. Monomer. Binds to host (human) pulmonary surfactant-associated protein A1 (SFTPA1), the major mammalian protein component of pulmonary surfactant. Binds to host (human) surface annexin A2 (ANXA2) on the cell surface; anti-ANXA2 antibodies decrease binding to cells. Interacts with cytosolic host (human) NLRP3, which it ADP-ribosylates in vitro. In terms of processing, 8 hours after treatment of HeLa cells with purified protein, a substantial amount is processed to 2 nearly equal-sized fragments. The disulfide bond between Cys-230 and Cys-247 is required to for the toxin to exert its mART and vacuolating activities within target cells, and for protein processing. Acidic pH in the endosome and retrograde transport are required for toxin cleavage, which is required for both toxin activities. Trypsin treatment under mild conditions leads to cleavage at Lys-305 and Lys-307; the 2 proteins fragments remain associated and can be internalized and vacuolate HeLa cells.

It is found in the cell membrane. It localises to the cytoplasm. Its subcellular location is the cell surface. The protein localises to the cell projection. The protein resides in the attachment organelle. It is found in the host cytoplasm. It localises to the host cytosol. Its subcellular location is the host endoplasmic reticulum. In vitro ADP-ribosylation is enhanced by dithiotheritol. Its function is as follows. The main virulence factor for this bacteria, a mono-ADP-ribosylating toxin (mART), that transfers the ADP-ribosyl group from NAD(+) to multiple target proteins in vitro. Also elicits cytopathic effects in mammalian cells, such as disorganization and disruption of respiratory epithelial integrity in tracheal epithelium and vacuolization in the cytoplasm of CHO and HeLa cells as well as in mice and baboons. Treatment of mice or baboons with CARDS elicits a response that is consistent with human M.pneumoniae infections and mouse models of both infection and intoxication, suggesting that CARDS toxin is sufficient to cause prolonged inflammatory responses and airway dysfunction. Treatment of baboons with CARDS induces a number of cytokines; G-CSF (40 fold), IL-1Ra (10 fold), IL-6 and IL-8 (333 and 100 fold, respectively), MIP-1a (5 fold), and RANTES (9 fold). Treatment of mice gives a similar response. Binds phosphatidyl choline, dipalmitoylphosphatidylcholine (DPPC) and sphingomyelin via domains D2 plus D3. Functionally, has at least 2 host receptors SFTPA1 and ANXA2. Internalized by a clathrin-mediated process; protein is rapidly taken up at 37 degrees Celsius. Clathrin-independent or caveolin-dependent endocytosis were not detected. In HeLa cells internalized CARDS trafficks toward the nucleus by retrograde transport from early to late endosomes, then the Golgi apparatus; at 16 hours most toxin is concentrated in the perinuclear region in the host endoplasmic reticulum (ER). Failure to localize to the host ER prevents ADP-ribosylation and vacuolization. An acidic compartment is required to mediate retrotransport and processing of toxin into an N-terminal fragment with mART activity and a C-terminal fragment that is able to induce vacuolization. In terms of biological role, induces the host NLRP3 inflammasome to release interleukin-1 beta (IL-1 beta); IL-1 beta release requires ADP-ribosylation activity and uptake by host macrophages. In the host colocalizes with the NLRP3 inflammasome; ADP-ribosylates NLRP3 in vitro. ADP-ribosylation of NLRP3 may lead to hyperinflammation. This Mycoplasma pneumoniae (strain ATCC 29342 / M129 / Subtype 1) (Mycoplasmoides pneumoniae) protein is ADP-ribosylating toxin CARDS.